A 148-amino-acid chain; its full sequence is D-aminoacyl-tRNA deacylase (148 aa).

The Gly-cisPro motif, important for rejection of L-amino acids motif lies at 137–138 (GP).

Belongs to the DTD family. In terms of assembly, homodimer.

The protein localises to the cytoplasm. The catalysed reaction is glycyl-tRNA(Ala) + H2O = tRNA(Ala) + glycine + H(+). It carries out the reaction a D-aminoacyl-tRNA + H2O = a tRNA + a D-alpha-amino acid + H(+). An aminoacyl-tRNA editing enzyme that deacylates mischarged D-aminoacyl-tRNAs. Also deacylates mischarged glycyl-tRNA(Ala), protecting cells against glycine mischarging by AlaRS. Acts via tRNA-based rather than protein-based catalysis; rejects L-amino acids rather than detecting D-amino acids in the active site. By recycling D-aminoacyl-tRNA to D-amino acids and free tRNA molecules, this enzyme counteracts the toxicity associated with the formation of D-aminoacyl-tRNA entities in vivo and helps enforce protein L-homochirality. This Oenococcus oeni (strain ATCC BAA-331 / PSU-1) protein is D-aminoacyl-tRNA deacylase.